A 265-amino-acid polypeptide reads, in one-letter code: tRNA pseudouridine synthase A (265 aa).

The Nucleophile role is filled by D55. Residue Y113 participates in substrate binding.

It belongs to the tRNA pseudouridine synthase TruA family. In terms of assembly, homodimer.

The enzyme catalyses uridine(38/39/40) in tRNA = pseudouridine(38/39/40) in tRNA. Functionally, formation of pseudouridine at positions 38, 39 and 40 in the anticodon stem and loop of transfer RNAs. The sequence is that of tRNA pseudouridine synthase A from Levilactobacillus brevis (strain ATCC 367 / BCRC 12310 / CIP 105137 / JCM 1170 / LMG 11437 / NCIMB 947 / NCTC 947) (Lactobacillus brevis).